The primary structure comprises 46 residues: uncharacterized protein (46 aa).

It to equivalent protein in phage 82.

This is an uncharacterized protein from Escherichia coli (strain K12).